The following is a 542-amino-acid chain: Sensor protein CitS (542 aa).

Over 1–13 (MVKKRFHFSLQTK) the chain is Cytoplasmic. A helical membrane pass occupies residues 14-34 (IMGLIAALLVFVIGVLTITLA). At 35 to 175 (VQHTQGERRQ…TEQSIKKHLR (141 aa)) the chain is on the extracellular side. A helical membrane pass occupies residues 176–196 (NLSVIAVLVLLLGFIGAAVLA). The Cytoplasmic portion of the chain corresponds to 197–542 (KSIRKDTLGL…PFDSHRDCGG (346 aa)). Residues 216–279 (RERNAMLFAI…MSVLEKGEML (64 aa)) form the PAS domain. The Histidine kinase domain occupies 336-528 (AQTHEFSNKL…VFTVFIPKEK (193 aa)). The residue at position 339 (H339) is a Phosphohistidine; by autocatalysis.

The protein resides in the cell membrane. The enzyme catalyses ATP + protein L-histidine = ADP + protein N-phospho-L-histidine.. In terms of biological role, member of the two-component regulatory system CitT/CitS. Regulates the expression of the citM-yflN operon. Functions probably as a membrane-associated protein kinase that phosphorylates CitT in response to environmental citrate or Mg(2+)-citrate complex. This chain is Sensor protein CitS (citS), found in Bacillus subtilis (strain 168).